A 459-amino-acid polypeptide reads, in one-letter code: VGFKAGXKDYKLTXXTPEYETKDTDILAAFRXSPQPGVPPEEAGAAVAAXSSTGTWTTVWTDGXTSLXRYKGRCYGIEPVVGEENXXIXYVXYPLDLFEEGSVTNMFTSIVGNVFGFKALRALRLEDLRIPVAYVKTFQGPPHGIQVERDKLNKYGRPLLGCTIKPKLGLSAXNYGRAVYECLRGGLDFTKDDENVNSQPFMRWRDRFLFCAEAIYKAQAETGEIKGHYLNATAGTCEEMMKRAIFARELGVPIVMHDYLTGGFTANTSLAHYCRDNGLLLHIHRAMHAVIDRQKNHGIHFRVLAKALRMSGGDHIHSGTVVGKLEGERDITLGFVDLLRDDFIEKDRSRGIYFTQDWVSLPGVLPVASGGIHVWHMPALTEIFGDDSVLQFGGGTLGHPWGNAPGAVANRVALEACVQARIEGRDLASEGNEIIREATKWSPELAAACEVWKEIKFEF.

An N6,N6,N6-trimethyllysine modification is found at Lys-4. Residues Asn-113 and Thr-163 each coordinate substrate. Lys-165 acts as the Proton acceptor in catalysis. Lys-167 is a binding site for substrate. Residues Lys-191, Asp-193, and Glu-194 each coordinate Mg(2+). Lys-191 is modified (N6-carboxylysine). His-284 functions as the Proton acceptor in the catalytic mechanism. Residues Arg-285, His-317, and Ser-369 each contribute to the substrate site.

Belongs to the RuBisCO large chain family. Type I subfamily. Heterohexadecamer of 8 large chains and 8 small chains; disulfide-linked. The disulfide link is formed within the large subunit homodimers. Requires Mg(2+) as cofactor. Post-translationally, the disulfide bond which can form in the large chain dimeric partners within the hexadecamer appears to be associated with oxidative stress and protein turnover.

Its subcellular location is the plastid. The protein resides in the chloroplast. It carries out the reaction 2 (2R)-3-phosphoglycerate + 2 H(+) = D-ribulose 1,5-bisphosphate + CO2 + H2O. The enzyme catalyses D-ribulose 1,5-bisphosphate + O2 = 2-phosphoglycolate + (2R)-3-phosphoglycerate + 2 H(+). RuBisCO catalyzes two reactions: the carboxylation of D-ribulose 1,5-bisphosphate, the primary event in carbon dioxide fixation, as well as the oxidative fragmentation of the pentose substrate in the photorespiration process. Both reactions occur simultaneously and in competition at the same active site. In Apium graveolens (Celery), this protein is Ribulose bisphosphate carboxylase large chain.